The following is a 198-amino-acid chain: UPF0301 protein BDI_1431 (198 aa).

It belongs to the UPF0301 (AlgH) family.

The polypeptide is UPF0301 protein BDI_1431 (Parabacteroides distasonis (strain ATCC 8503 / DSM 20701 / CIP 104284 / JCM 5825 / NCTC 11152)).